The following is a 62-amino-acid chain: Cytochrome b-c1 complex subunit 6-2, mitochondrial (62 aa).

Cystine bridges form between Cys17/Cys59 and Cys31/Cys45.

This sequence belongs to the UQCRH/QCR6 family. In terms of assembly, component of the ubiquinol-cytochrome c oxidoreductase (cytochrome b-c1 complex, complex III, CIII), a multisubunit enzyme composed of 10 subunits. The complex is composed of 3 respiratory subunits cytochrome b (MT-CYB), cytochrome c1 (CYC1-1 or CYC1-2) and Rieske protein (UCR1-1 or UCR1-2), 2 core protein subunits MPPalpha1 (or MPPalpha2) and MPPB, and 5 low-molecular weight protein subunits QCR7-1 (or QCR7-2), UCRQ-1 (or UCRQ-2), QCR9, UCRY and probably QCR6-1 (or QCR6-2). The complex exists as an obligatory dimer and forms supercomplexes (SCs) in the inner mitochondrial membrane with NADH-ubiquinone oxidoreductase (complex I, CI), resulting in different assemblies (supercomplexes SCI(1)III(2) and SCI(2)III(4)).

It is found in the mitochondrion inner membrane. In terms of biological role, component of the ubiquinol-cytochrome c oxidoreductase, a multisubunit transmembrane complex that is part of the mitochondrial electron transport chain which drives oxidative phosphorylation. The respiratory chain contains 3 multisubunit complexes succinate dehydrogenase (complex II, CII), ubiquinol-cytochrome c oxidoreductase (cytochrome b-c1 complex, complex III, CIII) and cytochrome c oxidase (complex IV, CIV), that cooperate to transfer electrons derived from NADH and succinate to molecular oxygen, creating an electrochemical gradient over the inner membrane that drives transmembrane transport and the ATP synthase. The cytochrome b-c1 complex catalyzes electron transfer from ubiquinol to cytochrome c, linking this redox reaction to translocation of protons across the mitochondrial inner membrane, with protons being carried across the membrane as hydrogens on the quinol. In the process called Q cycle, 2 protons are consumed from the matrix, 4 protons are released into the intermembrane space and 2 electrons are passed to cytochrome c. The protein is Cytochrome b-c1 complex subunit 6-2, mitochondrial (QCR6-2) of Arabidopsis thaliana (Mouse-ear cress).